A 610-amino-acid chain; its full sequence is Oxidoreductase ptaE (610 aa).

The N-terminal stretch at 1–20 (MFQSILFLAFYGRPVFGSAA) is a signal peptide. 2 consecutive Plastocyanin-like domains span residues 67–181 (QIIS…HGPS) and 191–344 (PWLL…IVRY). N-linked (GlcNAc...) asparagine glycans are attached at residues N105, N111, N262, N277, N330, N356, N401, N409, N427, and N602. Residues 425–568 (YVNWSEPSVK…IAIQFLEQPS (144 aa)) enclose the Plastocyanin-like 3 domain.

The protein belongs to the multicopper oxidase family.

It functions in the pathway secondary metabolite biosynthesis. Oxidoreductase; part of the gene cluster that mediates the biosynthesis of pestheic acid, a diphenyl ether which is a biosynthetic precursor of the unique chloropupukeananes. The biosynthesis initiates from condensation of acetate and malonate units catalyzed by the non-reducing PKS ptaA. As the ptaA protein is TE/CLC domain-deficient, hydrolysis and Claisen cyclization of the polyketide could be catalyzed by ptaB containing a beta-lactamase domain. The ptaB protein might hydrolyze the thioester bond between the ACP of ptaA and the intermediate to release atrochrysone carboxylic acid, which is spontaneously dehydrated to form endocrocin anthrone. Endocrocin anthrone is then converted to endocrocin, catalyzed by the anthrone oxygenase ptaC. Spontaneous decarboxylation of endocrocin occurs to generate emodin. An O-methyltransferase (ptaH or ptaI) could methylate emodin to form physcion. PtaJ could then catalyze the oxidative cleavage of physcion, and rotation of the intermediate could then afford desmethylisosulochrin. PtaF, a putative NADH-dependent oxidoreductase, might also participate in the oxidative cleavage step. Desmethylisosulochrin is then transformed by another O-methyltransferase (ptaH or ptaI) to form isosulochrin. Chlorination of isosulochrin by ptaM in the cyclohexadienone B ring then produces chloroisosulochrin. PtaE is responsible for the oxidative coupling reactions of both benzophenones isosulouchrin and chloroisosulochrin to RES-1214-1 and pestheic acid respectively, regardless of chlorination. The protein is Oxidoreductase ptaE of Pestalotiopsis fici (strain W106-1 / CGMCC3.15140).